The sequence spans 1849 residues: SH3 and multiple ankyrin repeat domains protein 2 (1849 aa).

Positions 1-33 (MPRSPTSSEDEMAQSFSDYSVGSESDSSKEETI) are disordered. Residues 15 to 25 (SFSDYSVGSES) show a composition bias toward low complexity. 6 ANK repeats span residues 196–226 (TGETPLTLAAQLDDSVEVIKALKNGGAHLDF), 230–259 (DGMTALHKAARARNQVALKTLLELGASPDY), 263–293 (YGLTPLYHTAIVGGDPYCCELLLHEHATVCC), 297–326 (NGWHEIHQACRYGHVQHLEHLLFYGADMSA), 330–359 (SGNTALHICALYNQDSCARVLLFRGGNKEL), and 363–393 (NSQTPFQVAIIAGNFELAEYIKNHKETDIVP). The interval 451–493 (QQMPSKPEGAAKTIGSYVPGPRSRSPSLNRLGGAGEDGKRPQP) is disordered. The SH3 domain maps to 526–585 (VPGRLFVAVKPYQPQVDGEIPLHRGDRVKVLSIGEGGFWEGSARGHIGWFPAECVEEVQC). The PDZ domain maps to 626-720 (TVVLQKKDNE…HLVLKVVTVT (95 aa)). A compositionally biased stretch (basic and acidic residues) spans 764–774 (SVRKKKDKPEE). The segment at 764–808 (SVRKKKDKPEEIVPASKPSRAAENMAVEPRVATIKQRPSSRCFPA) is disordered. Residue Ser-831 is modified to Phosphoserine. Residue Thr-860 is modified to Phosphothreonine. The segment at 878 to 910 (LSMPDTSEDIPPPPQSVPPSPPPPSPTTYNCPK) is disordered. The segment covering 887–903 (IPPPPQSVPPSPPPPSP) has biased composition (pro residues). Ser-960 is subject to Phosphoserine. Disordered stretches follow at residues 1013 to 1293 (LVKQ…RKGD), 1328 to 1371 (LQEE…TTVP), 1432 to 1526 (PALS…GGEN), and 1574 to 1594 (SFVIPPPAPPPPPGSAQPGMA). The segment covering 1040-1052 (STSSSGKSSQGSS) has biased composition (low complexity). Basic and acidic residues predominate over residues 1086 to 1097 (VRDREKRLEARR). A Phosphoserine modification is found at Ser-1099. Residues 1128-1138 (EEGDFADEDSA) show a composition bias toward acidic residues. 3 stretches are compositionally biased toward low complexity: residues 1159–1170 (GGAEASAPGEAG), 1181–1199 (GPESSPAVPSASSGTAGPG), and 1208–1221 (RLLDPSSPLALALS). Residues 1274-1293 (RRQETENKYETDLGRDRKGD) show a composition bias toward basic and acidic residues. Position 1278 is a phosphothreonine (Thr-1278). The SH3-binding signature appears at 1327–1333 (ALQEEDE). The segment covering 1343 to 1357 (SSPSEVPEGVSETEG) has biased composition (low complexity). The span at 1445–1460 (TPQSPSLNSSQPTNSA) shows a compositional bias: polar residues. Residues 1494 to 1505 (VDSRSSSDHHLE) are compositionally biased toward basic and acidic residues. Residues 1506–1522 (TTSTISTVSSISTLSSE) are compositionally biased toward low complexity. The span at 1577 to 1588 (IPPPAPPPPPGS) shows a compositional bias: pro residues. A glycan (O-linked (GlcNAc) threonine) is linked at Thr-1667. The segment covering 1678–1692 (FTVRPGTSQPITLQS) has biased composition (polar residues). The segment at 1678–1776 (FTVRPGTSQP…SILQQPISNK (99 aa)) is disordered. Ser-1709 and Ser-1713 each carry phosphoserine. 2 stretches are compositionally biased toward low complexity: residues 1721-1738 (TLPAPLSAATASPSPALS) and 1760-1774 (RSRSPSPSILQQPIS). One can recognise an SAM domain in the interval 1786–1849 (WTKPDVADWL…ERALKQLLDR (64 aa)).

It belongs to the SHANK family. As to quaternary structure, is part of a complex with DLG4/PSD-95 and DLGAP1/GKAP. Interacts with CTTN/cortactin SH3 domain, DLGAP1/GKAP and alpha-latrotoxin receptor 1. Interacts with DNM2, DBNL, GRID2, BAIAP2, SLC9A3, PLCB3 and CFTR. Interacts (via proline-rich region) with PDE4D. Interacts with ABI1 (via SH3 domain). Isoform 3 is present in epithelial colonic cells (at protein level).

The protein resides in the apical cell membrane. Its subcellular location is the cytoplasm. It is found in the synapse. It localises to the postsynaptic density. The protein localises to the cell projection. The protein resides in the growth cone. Its subcellular location is the dendritic spine. Seems to be an adapter protein in the postsynaptic density (PSD) of excitatory synapses that interconnects receptors of the postsynaptic membrane including NMDA-type and metabotropic glutamate receptors, and the actin-based cytoskeleton. May play a role in the structural and functional organization of the dendritic spine and synaptic junction. In Homo sapiens (Human), this protein is SH3 and multiple ankyrin repeat domains protein 2 (SHANK2).